The following is a 271-amino-acid chain: HTH-type transcriptional repressor AllR (271 aa).

In terms of domain architecture, HTH iclR-type spans 21–83 (AQALERGIAI…SQLGWWHIGL (63 aa)). The segment at residues 43–62 (VSDISLNLDLPLSTTFRLLK) is a DNA-binding region (H-T-H motif). Positions 98–267 (VLSVAGPFMR…ARDISTALGL (170 aa)) constitute an IclR-ED domain. Residues 154–156 (SGA), D207, C217, and 234–236 (SIS) contribute to the glyoxylate site.

Negative regulator of allantoin and glyoxylate utilization operons. Binds to the gcl promoter and to the allS-allA intergenic region. This chain is HTH-type transcriptional repressor AllR (allR), found in Escherichia coli (strain UTI89 / UPEC).